A 314-amino-acid chain; its full sequence is Small ribosomal subunit biogenesis GTPase RsgA (314 aa).

Residues Met1–Ala20 form a disordered region. The CP-type G domain occupies Ser85–Phe246. Residues Asn134–Asp137 and Gly188–Thr196 each bind GTP. Cys270, Cys275, His277, and Cys283 together coordinate Zn(2+).

Belongs to the TRAFAC class YlqF/YawG GTPase family. RsgA subfamily. In terms of assembly, monomer. Associates with 30S ribosomal subunit, binds 16S rRNA. The cofactor is Zn(2+).

The protein resides in the cytoplasm. One of several proteins that assist in the late maturation steps of the functional core of the 30S ribosomal subunit. Helps release RbfA from mature subunits. May play a role in the assembly of ribosomal proteins into the subunit. Circularly permuted GTPase that catalyzes slow GTP hydrolysis, GTPase activity is stimulated by the 30S ribosomal subunit. This chain is Small ribosomal subunit biogenesis GTPase RsgA, found in Burkholderia pseudomallei (strain K96243).